Here is a 206-residue protein sequence, read N- to C-terminus: Large ribosomal subunit protein uL4 (206 aa).

Belongs to the universal ribosomal protein uL4 family. Part of the 50S ribosomal subunit.

One of the primary rRNA binding proteins, this protein initially binds near the 5'-end of the 23S rRNA. It is important during the early stages of 50S assembly. It makes multiple contacts with different domains of the 23S rRNA in the assembled 50S subunit and ribosome. Its function is as follows. Forms part of the polypeptide exit tunnel. This Jannaschia sp. (strain CCS1) protein is Large ribosomal subunit protein uL4.